The chain runs to 421 residues: Histidine--tRNA ligase (421 aa).

It belongs to the class-II aminoacyl-tRNA synthetase family. Homodimer.

It localises to the cytoplasm. The catalysed reaction is tRNA(His) + L-histidine + ATP = L-histidyl-tRNA(His) + AMP + diphosphate + H(+). This Fervidobacterium nodosum (strain ATCC 35602 / DSM 5306 / Rt17-B1) protein is Histidine--tRNA ligase.